We begin with the raw amino-acid sequence, 249 residues long: O-methyltransferase adaD (249 aa).

Low complexity predominate over residues 1-15 (MSSVTLTTTTTTTST). The disordered stretch occupies residues 1–26 (MSSVTLTTTTTTTSTPPKPTPKDEPQ).

It belongs to the methyltransferase superfamily.

It catalyses the reaction 2-acetyl-3,4a,8,10,11,12a-hexahydroxy-1,4,4a,5,12,12a-hexahydrotetracene-1,12-dione + S-adenosyl-L-methionine = TAN-1612 + S-adenosyl-L-homocysteine + H(+). The protein operates within secondary metabolite biosynthesis. O-methyltransferase; part of the gene cluster that mediates the biosynthesis of the linear tetracyclic TAN-1612 neuropeptide Y receptor antagonist. The decaketide backbone of TAN-1612 is synthesized by the non-reducing polyketide synthase adaA via condensation of one acetyl-CoA starter unit with 9 malonyl-CoA units. The FAD-dependent monooxygenase adaC then performs hydroxylation at C2 while the polaketide chain is still attached to the NRPKS adaA. The alpha-hydroxylation step at C2 appears to be crucial for the following C18-C1 Claisen cyclization and release of the C9-hydroxyl version of TAN-1612 from the NRPKS adaA, two steps performed by the lactamase-like protein adaB. Finally, the O-methyltransferase adaD performs the C9 O-methylation to complete the biosynthesis of TAN-1612. This Aspergillus niger (strain ATCC MYA-4892 / CBS 513.88 / FGSC A1513) protein is O-methyltransferase adaD.